The sequence spans 65 residues: Non-structural protein 5a (65 aa).

The chain is Non-structural protein 5a from Avian infectious bronchitis virus (strain Beaudette) (IBV).